An 82-amino-acid chain; its full sequence is uncharacterized protein (82 aa).

The segment covering threonine 29–serine 38 has biased composition (low complexity). Residues threonine 29–serine 64 are disordered. Over residues valine 39–proline 50 the composition is skewed to polar residues. Over residues leucine 51 to serine 64 the composition is skewed to low complexity.

This is an uncharacterized protein from Dictyostelium discoideum (Social amoeba).